We begin with the raw amino-acid sequence, 555 residues long: 2-isopropylmalate synthase (555 aa).

The 274-residue stretch at 30–303 (PIWCSVDLRD…DPGLDCTDIN (274 aa)) folds into the Pyruvate carboxyltransferase domain. Positions 39, 242, 244, and 278 each coordinate Mg(2+). The tract at residues 437-555 (QPDARIKFVD…VSAANRVIAK (119 aa)) is regulatory domain.

Belongs to the alpha-IPM synthase/homocitrate synthase family. LeuA type 2 subfamily. In terms of assembly, homodimer. Mg(2+) serves as cofactor.

It is found in the cytoplasm. The catalysed reaction is 3-methyl-2-oxobutanoate + acetyl-CoA + H2O = (2S)-2-isopropylmalate + CoA + H(+). The protein operates within amino-acid biosynthesis; L-leucine biosynthesis; L-leucine from 3-methyl-2-oxobutanoate: step 1/4. In terms of biological role, catalyzes the condensation of the acetyl group of acetyl-CoA with 3-methyl-2-oxobutanoate (2-ketoisovalerate) to form 3-carboxy-3-hydroxy-4-methylpentanoate (2-isopropylmalate). The sequence is that of 2-isopropylmalate synthase from Brucella melitensis biotype 1 (strain ATCC 23456 / CCUG 17765 / NCTC 10094 / 16M).